Reading from the N-terminus, the 281-residue chain is Imidazole glycerol phosphate synthase subunit HisF (281 aa).

Catalysis depends on residues aspartate 12 and aspartate 131. The disordered stretch occupies residues 256–281; the sequence is VRQAEPLPQPAREGLGDSARRAMSSG.

Belongs to the HisA/HisF family. In terms of assembly, heterodimer of HisH and HisF.

It is found in the cytoplasm. It catalyses the reaction 5-[(5-phospho-1-deoxy-D-ribulos-1-ylimino)methylamino]-1-(5-phospho-beta-D-ribosyl)imidazole-4-carboxamide + L-glutamine = D-erythro-1-(imidazol-4-yl)glycerol 3-phosphate + 5-amino-1-(5-phospho-beta-D-ribosyl)imidazole-4-carboxamide + L-glutamate + H(+). It participates in amino-acid biosynthesis; L-histidine biosynthesis; L-histidine from 5-phospho-alpha-D-ribose 1-diphosphate: step 5/9. Functionally, IGPS catalyzes the conversion of PRFAR and glutamine to IGP, AICAR and glutamate. The HisF subunit catalyzes the cyclization activity that produces IGP and AICAR from PRFAR using the ammonia provided by the HisH subunit. This is Imidazole glycerol phosphate synthase subunit HisF from Thermosynechococcus vestitus (strain NIES-2133 / IAM M-273 / BP-1).